Here is a 65-residue protein sequence, read N- to C-terminus: uncharacterized protein (65 aa).

This is an uncharacterized protein from Mycobacterium tuberculosis (strain ATCC 25618 / H37Rv).